A 308-amino-acid polypeptide reads, in one-letter code: Hydroxyacylglutathione hydrolase, mitochondrial (308 aa).

Residues 1 to 13 constitute a mitochondrion transit peptide; sequence MVVGRGLLGRRSL. Zn(2+)-binding residues include His-102, His-104, Asp-106, and His-107. Lys-116 carries the post-translational modification N6-acetyllysine. Residues His-158 and Asp-182 each coordinate Zn(2+). Residues 191–193 and 221–223 each bind substrate; these read KFY and HEY. Residue His-221 participates in Zn(2+) binding. Lys-229 bears the N6-acetyllysine; alternate mark. Residue Lys-229 is modified to N6-succinyllysine; alternate. 297–300 contacts substrate; that stretch reads RREK.

The protein belongs to the metallo-beta-lactamase superfamily. Glyoxalase II family. Monomer. Zn(2+) serves as cofactor. Expressed in liver and kidney.

It is found in the mitochondrion matrix. It localises to the cytoplasm. It catalyses the reaction an S-(2-hydroxyacyl)glutathione + H2O = a 2-hydroxy carboxylate + glutathione + H(+). The catalysed reaction is (R)-S-lactoylglutathione + H2O = (R)-lactate + glutathione + H(+). It functions in the pathway secondary metabolite metabolism; methylglyoxal degradation; (R)-lactate from methylglyoxal: step 2/2. Functionally, thiolesterase that catalyzes the hydrolysis of S-D-lactoyl-glutathione to form glutathione and D-lactic acid. The sequence is that of Hydroxyacylglutathione hydrolase, mitochondrial (HAGH) from Homo sapiens (Human).